Here is a 331-residue protein sequence, read N- to C-terminus: Inner membrane ABC transporter permease protein YjfF (331 aa).

Over 1 to 5 (MIKRN) the chain is Cytoplasmic. A helical membrane pass occupies residues 6–26 (LPLMITIGVFVLGYLYCLTQF). Over 27–42 (PGFASTRVICNILTDN) the chain is Periplasmic. The helical transmembrane segment at 43 to 63 (AFLGIIAVGMTFVILSGGIDL) threads the bilayer. Topologically, residues 64 to 88 (SVGSVIAFTGVFLAKVIGDFGLSPL) are cytoplasmic. A helical transmembrane segment spans residues 89 to 109 (LAFPLVLVMGCAFGAFMGLLI). Residues 110-113 (DALK) lie on the Periplasmic side of the membrane. Residues 114–134 (IPAFIITLAGMFFLRGVSYLV) form a helical membrane-spanning segment. The Cytoplasmic segment spans residues 135-159 (SEESIPINHPIYDTLSSLAWKIPGG). Residues 160-180 (GRLSAMGLLMLAVVVIGIFLA) form a helical membrane-spanning segment. Over 181–222 (HRTRFGNQVYAIGGNATSANLMGISTRSTTIRIYMLSTGLAT) the chain is Periplasmic. A helical transmembrane segment spans residues 223–243 (LAGIVFSIYTQAGYALAGVGV). Residues 244-250 (ELDAIAS) are Cytoplasmic-facing. A helical transmembrane segment spans residues 251–271 (VVIGGTLLSGGVGTVLGTLFG). Topologically, residues 272-294 (VAIQGLIQTYINFDGTLSSWWTK) are periplasmic. A helical membrane pass occupies residues 295 to 315 (IAIGILLFIFIALQRGLTVLW). The Cytoplasmic segment spans residues 316–331 (ENRQSSPVTRVNIAQQ).

The protein belongs to the binding-protein-dependent transport system permease family. AraH/RbsC subfamily. In terms of assembly, the complex is composed of two ATP-binding proteins (YtfR), two transmembrane proteins (YtfT and YjfF) and a solute-binding protein (YtfQ).

The protein localises to the cell inner membrane. Functionally, part of the ABC transporter complex YtfQRT-YjfF involved in galactofuranose transport. Probably responsible for the translocation of the substrate across the membrane. The chain is Inner membrane ABC transporter permease protein YjfF (yjfF) from Escherichia coli (strain K12).